Here is a 999-residue protein sequence, read N- to C-terminus: Cytoplasmic dynein 2 intermediate chain 1 (999 aa).

4 stretches are compositionally biased toward basic and acidic residues: residues 1–19 (MEPG…DDLR), 29–138 (PKEE…EEIR), 146–260 (LLSR…EDRH), and 268–300 (GLHY…KELE). Residues 1 to 350 (MEPGKRRTKD…EHEAREKAEE (350 aa)) form a disordered region. S250 bears the Phosphoserine mark. Positions 318-338 (LEDDFVDYEDDFEVCDGDDDS) are enriched in acidic residues. Over residues 339–350 (NNEHEAREKAEE) the composition is skewed to basic and acidic residues. The binding to the DYNLT2B-DYNLT1/DYNLT3 dimer stretch occupies residues 416–495 (ASHRQKSRSQ…DIQTEDIETR (80 aa)). 4 WD repeats span residues 637-677 (ICES…RIHH), 718-764 (AYKK…KADI), 850-890 (VRPI…PIMQ), and 895-935 (TSGH…LGPV).

This sequence belongs to the dynein light intermediate chain family. Intermediate chain of the cytoplasmic dynein complex 2, a multisubunit complex, composed at least of eleven different proteins. The cytoplasmic dynein 2 complex consists of two catalytic heavy chains (HCs) and a number of non-catalytic subunits presented by intermediate chains (ICs), light intermediate chains (LICs) and light chains (LCs). Among them, a heavy chain (DYNC2H1), two intermediate chains (DYNC2I2 and DYNC2I1), a light intermediate chain (DYNC2LI1), and a light chain (DYNLT2B) are unique to the cytoplasmic dynein complex 2, but a subset of the light chains are also shared by dynein-1 and dynein-2 complexes. Interacts with DYNC2I2; their C-terminal domains each bind a copy of the heavy chain, and their extended N-terminal regions are held together by an array of light chain dimers. Interacts with DYNLT2B. Interacts (via the N-terminal half) with DYNLT2B-DYNLT1 dimer or with DYNLT2B-DYNLT3 dimer; this interaction is crucial for retrograde trafficking of ciliary proteins.

The protein resides in the cell projection. Its subcellular location is the cilium. The protein localises to the cytoplasm. It localises to the cytoskeleton. It is found in the microtubule organizing center. The protein resides in the centrosome. In terms of biological role, acts as one of several non-catalytic accessory components of the cytoplasmic dynein 2 complex (dynein-2 complex), a motor protein complex that drives the movement of cargos along microtubules within cilia and flagella in concert with the intraflagellar transport (IFT) system. DYNC2I1 plays a major role in retrograde ciliary protein trafficking in cilia and flagella. Also requires to maintain a functional transition zone. The protein is Cytoplasmic dynein 2 intermediate chain 1 (Dync2i1) of Mus musculus (Mouse).